The primary structure comprises 82 residues: RNA-binding protein GWCH70_0105 (82 aa).

The protein belongs to the eukaryotic ribosomal protein eL8 family.

This Geobacillus sp. (strain WCH70) protein is RNA-binding protein GWCH70_0105.